A 252-amino-acid polypeptide reads, in one-letter code: Transmembrane ascorbate-dependent reductase CYB561 (252 aa).

Methionine 1 carries the post-translational modification N-acetylmethionine. Over 1–17 (MESPAGRTPAPGALPYY) the chain is Cytoplasmic. A helical membrane pass occupies residues 18 to 38 (VAFSQLLGLTVVAVTGAWLGA). Positions 20 to 221 (FSQLLGLTVV…FGAVVLYILT (202 aa)) constitute a Cytochrome b561 domain. Residues 39–52 (YRGGIAWESALQFN) are Vesicular-facing. The chain crosses the membrane as a helical span at residues 53-73 (VHPLCMIIGLVFLQGDALLVY). Positions 54, 74, and 81 each coordinate heme b. Residues 74–85 (RVFRNEAKRTTK) lie on the Cytoplasmic side of the membrane. 2 residues coordinate L-ascorbate: lysine 81 and lysine 85. Residues 86–106 (ILHGLLHVLAFVIALVGLVAV) traverse the membrane as a helical segment. Residues histidine 88, 117 to 120 (DLYS), and histidine 122 each bind heme b. The Vesicular portion of the chain corresponds to 107-125 (FDYHRKKGIADLYSLHSWC). The chain crosses the membrane as a helical span at residues 126-146 (GILVFVLFLAQWLVGLGFFLF). Residues 147–159 (PGASFSLRSRYRP) are Cytoplasmic-facing. Arginine 154 is an L-ascorbate binding site. Residues 160–180 (QHVFFGAAIFLLSVGTALLGL) form a helical membrane-spanning segment. Histidine 161 and glutamate 182 together coordinate heme b. Topologically, residues 181 to 199 (KEALLFQLGTKYSAFESEG) are vesicular. Residues 200 to 220 (VLANVLGLLLVAFGAVVLYIL) form a helical membrane-spanning segment. Residues 221–252 (TRADWKRPLQAEEQALSMDFKTLTEGDSPSSQ) lie on the Cytoplasmic side of the membrane. Lysine 226 contributes to the heme b binding site. A phosphoserine mark is found at serine 248 and serine 250.

The cofactor is heme b.

The protein resides in the cytoplasmic vesicle. It localises to the secretory vesicle. Its subcellular location is the chromaffin granule membrane. The enzyme catalyses monodehydro-L-ascorbate radical(out) + L-ascorbate(in) = monodehydro-L-ascorbate radical(in) + L-ascorbate(out). Transmembrane reductase that uses ascorbate as an electron donor in the cytoplasm and transfers electrons across membranes to reduce monodehydro-L-ascorbate radical in the lumen of secretory vesicles. It is therefore involved the regeneration and homeostasis within secretory vesicles of ascorbate which in turn provides reducing equivalents needed to support the activity of intravesicular enzymes. The sequence is that of Transmembrane ascorbate-dependent reductase CYB561 (CYB561) from Sus scrofa (Pig).